Consider the following 713-residue polypeptide: Polyribonucleotide nucleotidyltransferase (713 aa).

Residues D495 and D501 each contribute to the Mg(2+) site. The region spanning 562–621 (PRLLTLKIPVDMIGLVIGPGGKTIKRIVEETGAKVDIEDDGTVVVSSIDGAKALAAKQII) is the KH domain. Residues 631 to 700 (DKVYLGTVTR…QKGRINLTRR (70 aa)) enclose the S1 motif domain.

The protein belongs to the polyribonucleotide nucleotidyltransferase family. Mg(2+) is required as a cofactor.

The protein resides in the cytoplasm. It catalyses the reaction RNA(n+1) + phosphate = RNA(n) + a ribonucleoside 5'-diphosphate. In terms of biological role, involved in mRNA degradation. Catalyzes the phosphorolysis of single-stranded polyribonucleotides processively in the 3'- to 5'-direction. The protein is Polyribonucleotide nucleotidyltransferase of Gloeobacter violaceus (strain ATCC 29082 / PCC 7421).